We begin with the raw amino-acid sequence, 600 residues long: Baculoviral IAP repeat-containing protein 3 (600 aa).

One copy of the BIR 1 repeat lies at 27-94 (ELYRLSTYSA…RKLYPSCNFV (68 aa)). Ser-138 carries the post-translational modification Phosphoserine. 2 BIR repeats span residues 167-233 (EKAR…CPFL) and 253-320 (HAAR…CEYL). Positions 290, 293, 310, and 317 each coordinate Zn(2+). The 90-residue stretch at 436 to 525 (EESDDLALIR…ALYRDIFVQQ (90 aa)) folds into the CARD domain. Residues 553–588 (CKVCMDREVSIVFIPCGHLVVCKDCAPSLRKCPICR) form an RING-type zinc finger.

The protein belongs to the IAP family. Interacts with PRSS25; the interaction inhibits apoptotic suppressor activity. The BIR motifs region interacts with TNF receptor associated factors 1 and 2 (TRAF1 and TRAF2) to form a heteromeric complex, which is then recruited to the tumor necrosis factor receptor 2 (TNFR2). Interaction with TRAF2 is required for ubiquitination of IKBKE, degradation of NFKBIA and activation of NF-kappa-B. Interacts with RIP1, RIP2, RIP3, RIP4 and USP19. Post-translationally, auto-ubiquitinated and degraded by the proteasome in apoptotic cells.

It localises to the cytoplasm. Its subcellular location is the nucleus. It carries out the reaction S-ubiquitinyl-[E2 ubiquitin-conjugating enzyme]-L-cysteine + [acceptor protein]-L-lysine = [E2 ubiquitin-conjugating enzyme]-L-cysteine + N(6)-ubiquitinyl-[acceptor protein]-L-lysine.. With respect to regulation, USP19 regulates the stability of BIRC3/c-IAP2 by preventing its ubiquitination. Multi-functional protein which regulates not only caspases and apoptosis, but also modulates inflammatory signaling and immunity, mitogenic kinase signaling and cell proliferation, as well as cell invasion and metastasis. Acts as an E3 ubiquitin-protein ligase regulating NF-kappa-B signaling and regulates both canonical and non-canonical NF-kappa-B signaling by acting in opposite directions: acts as a positive regulator of the canonical pathway and suppresses constitutive activation of non-canonical NF-kappa-B signaling. The target proteins for its E3 ubiquitin-protein ligase activity include: RIPK1, RIPK2, RIPK3, RIPK4, CASP3, CASP7, CASP8, IKBKE, TRAF1, and BCL10. Acts as an important regulator of innate immune signaling via regulation of Toll-like receptors (TLRs), Nodlike receptors (NLRs) and RIG-I like receptors (RLRs), collectively referred to as pattern recognition receptors (PRRs). Protects cells from spontaneous formation of the ripoptosome, a large multi-protein complex that has the capability to kill cancer cells in a caspase-dependent and caspase-independent manner. Suppresses ripoptosome formation by ubiquitinating RIPK1 and CASP8. The protein is Baculoviral IAP repeat-containing protein 3 (Birc3) of Mus musculus (Mouse).